The chain runs to 162 residues: RNA pyrophosphohydrolase (162 aa).

The region spanning 11–155 is the Nudix hydrolase domain; the sequence is PYRPCVGIVL…KRAVYEEVVA (145 aa). The short motif at 45–66 is the Nudix box element; the sequence is GGIDEGEKPREAALRELWEETG.

This sequence belongs to the Nudix hydrolase family. RppH subfamily. Requires a divalent metal cation as cofactor.

In terms of biological role, accelerates the degradation of transcripts by removing pyrophosphate from the 5'-end of triphosphorylated RNA, leading to a more labile monophosphorylated state that can stimulate subsequent ribonuclease cleavage. The protein is RNA pyrophosphohydrolase of Cereibacter sphaeroides (strain ATCC 17023 / DSM 158 / JCM 6121 / CCUG 31486 / LMG 2827 / NBRC 12203 / NCIMB 8253 / ATH 2.4.1.) (Rhodobacter sphaeroides).